Consider the following 213-residue polypeptide: Probable GH family 25 lysozyme 4 (213 aa).

Positions 1 to 19 are cleaved as a signal peptide; it reads MRLFLLLITFIALFGAINA. In terms of domain architecture, Ch-type lysozyme spans 21 to 213; it reads SGVDISQGSS…VGYDFNWYPN (193 aa). Active-site residues include Asp24, Asp112, and Glu114.

The protein belongs to the glycosyl hydrolase 25 family.

It is found in the secreted. The enzyme catalyses Hydrolysis of (1-&gt;4)-beta-linkages between N-acetylmuramic acid and N-acetyl-D-glucosamine residues in a peptidoglycan and between N-acetyl-D-glucosamine residues in chitodextrins.. The sequence is that of Probable GH family 25 lysozyme 4 from Dictyostelium discoideum (Social amoeba).